A 447-amino-acid chain; its full sequence is Protein king tubby (447 aa).

Low complexity-rich tracts occupy residues 71 to 92 (GTGP…YSDS) and 157 to 169 (NNNN…NSSS). The disordered stretch occupies residues 71 to 196 (GTGPNVTATS…GGAPDTEGDV (126 aa)).

The protein belongs to the TUB family.

Its subcellular location is the cytoplasm. It is found in the nucleus. This chain is Protein king tubby, found in Anopheles gambiae (African malaria mosquito).